A 76-amino-acid polypeptide reads, in one-letter code: Small ribosomal subunit protein bS18 (76 aa).

This sequence belongs to the bacterial ribosomal protein bS18 family. Part of the 30S ribosomal subunit. Forms a tight heterodimer with protein bS6.

Its function is as follows. Binds as a heterodimer with protein bS6 to the central domain of the 16S rRNA, where it helps stabilize the platform of the 30S subunit. This chain is Small ribosomal subunit protein bS18, found in Nitrosomonas eutropha (strain DSM 101675 / C91 / Nm57).